Reading from the N-terminus, the 229-residue chain is Large ribosomal subunit protein uL1 (229 aa).

It belongs to the universal ribosomal protein uL1 family. In terms of assembly, part of the 50S ribosomal subunit.

In terms of biological role, binds directly to 23S rRNA. The L1 stalk is quite mobile in the ribosome, and is involved in E site tRNA release. Protein L1 is also a translational repressor protein, it controls the translation of the L11 operon by binding to its mRNA. This Haemophilus ducreyi (strain 35000HP / ATCC 700724) protein is Large ribosomal subunit protein uL1.